A 417-amino-acid polypeptide reads, in one-letter code: Serine hydroxymethyltransferase (417 aa).

Residues Leu-122 and 126–128 each bind (6S)-5,6,7,8-tetrahydrofolate; that span reads GHL. At Lys-230 the chain carries N6-(pyridoxal phosphate)lysine. 355–357 provides a ligand contact to (6S)-5,6,7,8-tetrahydrofolate; sequence SPF.

It belongs to the SHMT family. In terms of assembly, homodimer. Pyridoxal 5'-phosphate is required as a cofactor.

The protein resides in the cytoplasm. The enzyme catalyses (6R)-5,10-methylene-5,6,7,8-tetrahydrofolate + glycine + H2O = (6S)-5,6,7,8-tetrahydrofolate + L-serine. The protein operates within one-carbon metabolism; tetrahydrofolate interconversion. Its pathway is amino-acid biosynthesis; glycine biosynthesis; glycine from L-serine: step 1/1. Its function is as follows. Catalyzes the reversible interconversion of serine and glycine with tetrahydrofolate (THF) serving as the one-carbon carrier. This reaction serves as the major source of one-carbon groups required for the biosynthesis of purines, thymidylate, methionine, and other important biomolecules. Also exhibits THF-independent aldolase activity toward beta-hydroxyamino acids, producing glycine and aldehydes, via a retro-aldol mechanism. The chain is Serine hydroxymethyltransferase from Francisella tularensis subsp. tularensis (strain FSC 198).